A 201-amino-acid chain; its full sequence is Recombination protein RecR (201 aa).

The C4-type zinc finger occupies 60 to 75 (CKVCGNIDTQNPCTVC). The 96-residue stretch at 83 to 178 (SIIVVVADVA…KVTRLAHGVP (96 aa)) folds into the Toprim domain.

Belongs to the RecR family.

Functionally, may play a role in DNA repair. It seems to be involved in an RecBC-independent recombinational process of DNA repair. It may act with RecF and RecO. This is Recombination protein RecR from Rhodopseudomonas palustris (strain BisB18).